Reading from the N-terminus, the 318-residue chain is uncharacterized protein (318 aa).

It to A.aeolicus AA07 and AA34.

This is an uncharacterized protein from Aquifex aeolicus (strain VF5).